Reading from the N-terminus, the 1518-residue chain is WD repeat-containing protein 62 (1518 aa).

Position 2 is an N-acetylalanine (alanine 2). The residue at position 33 (serine 33) is a Phosphoserine. Threonine 46 is subject to Phosphothreonine. Residue serine 49 is modified to Phosphoserine. Threonine 50 is subject to Phosphothreonine. Phosphoserine is present on serine 52. WD repeat units lie at residues 109–150, 153–194, 196–234, 291–330, 357–396, 402–450, 490–529, 532–574, 578–618, 626–665, 671–713, and 714–752; these read TARK…QVAE, GHKY…VVAS, KVSCRVIALSFSEDSSYFVTVGNRHVRFWFLEVSTETKV, INLKVSLSSCLCVSQELIFCGCTDGIVRIFQAHSLHYLAN, AVYPDTVALTFDPIHQWLSCVYKDHSIYIWDVKDINRVGK, FHSS…DSHW, DVKAGVRVMQVSPDGQHLASGDRSGNLRIHELHFMDELVK, AHDA…NLEQ, DHSS…DGLH, AEKTTLYDMDIDITQKYVAVACQDRNVRVYNTVNGKQKKC, GDEG…KMFG, and HSEIITSMKFTYDCHHLITVSGDSCVFIWHLGPEITNCM. A Phosphoserine modification is found at serine 501. Over residues 762–772 the composition is skewed to basic and acidic residues; it reads RQQQQHTNDKK. 2 disordered regions span residues 762–824 and 908–935; these read RQQQ…DPDP and ASLLSESESPQEAGRGHPSFLPQQKESS. A compositionally biased stretch (polar residues) spans 781 to 790; it reads TYVSTPSEIH. Positions 797-809 are enriched in acidic residues; that stretch reads QTEDDLEEECEPE. The WD 13 repeat unit spans residues 803 to 846; sequence EEECEPEEMLKTPSKDSLDPDPRCLLTNGKLPLWAKRLLGDDDV. Residues 810–824 are compositionally biased toward basic and acidic residues; that stretch reads EMLKTPSKDSLDPDP. Over residues 908 to 920 the composition is skewed to low complexity; sequence ASLLSESESPQEA. The residue at position 944 (serine 944) is a Phosphoserine. The tract at residues 962–1055 is disordered; sequence EVEAGPGDQQ…PSSSLPQTPE (94 aa). Polar residues-rich tracts occupy residues 971–981 and 1045–1054; these read QGDSYLRVSSD and VPSSSLPQTP. Threonine 1053 bears the Phosphothreonine mark. 8 positions are modified to phosphoserine: serine 1070, serine 1093, serine 1101, serine 1123, serine 1144, serine 1228, serine 1248, and serine 1249. Residues 1132–1173 form a WD 14 repeat; that stretch reads GGSQPRAGTGYASPDRTHVLAAGKAEETLEAWRPPPPCLTSL. The WD 15 repeat unit spans residues 1255–1293; the sequence is SLGQELQAITTATTPSLDSEGQEPALRSWGNHEARANLR. The residue at position 1268 (threonine 1268) is a Phosphothreonine. The segment at 1339–1377 is disordered; sequence FRPSLPAPESPGLPAHPSNPQLPEARPGIPGGTASLLEP.

Can form homodimers (via C-terminus). Interacts (via C-terminus) with MAPKBP1 (via C-terminus). Interacts with CDK5RAP2, CEP152, CEP63 and KIAA0753. CEP63, CDK5RAP2, CEP152, WDR62 are proposed to form a stepwise assembled complex at the centrosome forming a ring near parental centrioles. Present in fetal brain, enriched within the ventricular and subventricular zone (at protein level). In the embryonic brain it is expressed in mitotic neural precursor cells.

The protein localises to the nucleus. It localises to the cytoplasm. The protein resides in the cytoskeleton. It is found in the spindle pole. Its subcellular location is the microtubule organizing center. The protein localises to the centrosome. It localises to the centriole. Its function is as follows. Required for cerebral cortical development. Plays a role in neuronal proliferation and migration. Plays a role in mother-centriole-dependent centriole duplication; the function also seems to involve CEP152, CDK5RAP2 and CEP63 through a stepwise assembled complex at the centrosome that recruits CDK2 required for centriole duplication. This is WD repeat-containing protein 62 (WDR62) from Homo sapiens (Human).